Consider the following 215-residue polypeptide: 3-isopropylmalate dehydratase small subunit (215 aa).

This sequence belongs to the LeuD family. LeuD type 1 subfamily. Heterodimer of LeuC and LeuD.

It carries out the reaction (2R,3S)-3-isopropylmalate = (2S)-2-isopropylmalate. The protein operates within amino-acid biosynthesis; L-leucine biosynthesis; L-leucine from 3-methyl-2-oxobutanoate: step 2/4. Functionally, catalyzes the isomerization between 2-isopropylmalate and 3-isopropylmalate, via the formation of 2-isopropylmaleate. The polypeptide is 3-isopropylmalate dehydratase small subunit (Xanthomonas euvesicatoria pv. vesicatoria (strain 85-10) (Xanthomonas campestris pv. vesicatoria)).